We begin with the raw amino-acid sequence, 448 residues long: tRNA wybutosine-synthesizing protein 2 homolog (448 aa).

S-adenosyl-L-methionine contacts are provided by residues Ser-218, Lys-225, Glu-265, and 293-294 (DN).

It belongs to the class I-like SAM-binding methyltransferase superfamily. TRM5/TYW2 family.

It catalyses the reaction 4-demethylwyosine(37) in tRNA(Phe) + S-adenosyl-L-methionine = 4-demethyl-7-[(3S)-3-amino-3-carboxypropyl]wyosine(37) in tRNA(Phe) + S-methyl-5'-thioadenosine + H(+). It functions in the pathway tRNA modification; wybutosine-tRNA(Phe) biosynthesis. Its function is as follows. S-adenosyl-L-methionine-dependent transferase that acts as a component of the wybutosine biosynthesis pathway. Wybutosine is a hyper modified guanosine with a tricyclic base found at the 3'-position adjacent to the anticodon of eukaryotic phenylalanine tRNA. Catalyzes the transfer of the alpha-amino-alpha-carboxypropyl (acp) group from S-adenosyl-L-methionine to the C-7 position of 4-demethylwyosine (imG-14) to produce wybutosine-86. The polypeptide is tRNA wybutosine-synthesizing protein 2 homolog (TRMT12) (Homo sapiens (Human)).